A 294-amino-acid chain; its full sequence is MEIGLREWLILIGIIVIAGILFDGWRRMRGGKGKLKFRLDRSYSNLPDEEGSAEVLGPSRVLDTQKEPELDESDLPSLSAPAREREREQKPAKATKRGKRAAEMQPQGDLDLVAEPREPDLFADADDDFAGDNNRNSGFAAAGSAAKELPPVEEVLVISVISRDEGGFKGPALLQNILESGLRFGEMDIFHRHESMAGHGEVLFSMANAVKPGIFDLDDIDHFSTRAVSFFLGLPGPRHPKQAFDVMVAAARKLAHELNGELKDDQRSVLTAQTIEHYRQRIVEFERRALTQKR.

A topological domain (periplasmic) is located at residue methionine 1. A helical transmembrane segment spans residues 2–22; it reads EIGLREWLILIGIIVIAGILF. Residues 23-294 lie on the Cytoplasmic side of the membrane; the sequence is DGWRRMRGGK…FERRALTQKR (272 aa). A disordered region spans residues 47-107; that stretch reads PDEEGSAEVL…GKRAAEMQPQ (61 aa). Basic and acidic residues predominate over residues 82–91; that stretch reads AREREREQKP.

It belongs to the ZipA family. Interacts with FtsZ via their C-terminal domains.

It localises to the cell inner membrane. In terms of biological role, essential cell division protein that stabilizes the FtsZ protofilaments by cross-linking them and that serves as a cytoplasmic membrane anchor for the Z ring. Also required for the recruitment to the septal ring of downstream cell division proteins. This is Cell division protein ZipA from Pseudomonas putida (strain W619).